The primary structure comprises 1203 residues: DNA-directed RNA polymerase subunit beta (1203 aa).

The span at 1174–1195 (AAQEAKAAFEAEEAEKATKAEA) shows a compositional bias: basic and acidic residues. Positions 1174–1203 (AAQEAKAAFEAEEAEKATKAEATEEAAEQE) are disordered.

It belongs to the RNA polymerase beta chain family. The RNAP catalytic core consists of 2 alpha, 1 beta, 1 beta' and 1 omega subunit. When a sigma factor is associated with the core the holoenzyme is formed, which can initiate transcription.

The catalysed reaction is RNA(n) + a ribonucleoside 5'-triphosphate = RNA(n+1) + diphosphate. DNA-dependent RNA polymerase catalyzes the transcription of DNA into RNA using the four ribonucleoside triphosphates as substrates. This chain is DNA-directed RNA polymerase subunit beta, found in Streptococcus pneumoniae serotype 19F (strain G54).